The sequence spans 96 residues: MNIRPLHDRVIVKRLEEERKTASGIVIPDTAAEKPDQGEIIAVGKGKAGEDGKIRTLEVKVGDKVLFGKYAGQAVKIKGEEFLVMREEDIMGVIEG.

Belongs to the GroES chaperonin family. In terms of assembly, heptamer of 7 subunits arranged in a ring. Interacts with the chaperonin GroEL.

The protein localises to the cytoplasm. In terms of biological role, together with the chaperonin GroEL, plays an essential role in assisting protein folding. The GroEL-GroES system forms a nano-cage that allows encapsulation of the non-native substrate proteins and provides a physical environment optimized to promote and accelerate protein folding. GroES binds to the apical surface of the GroEL ring, thereby capping the opening of the GroEL channel. In Nitrosomonas eutropha (strain DSM 101675 / C91 / Nm57), this protein is Co-chaperonin GroES.